Here is a 203-residue protein sequence, read N- to C-terminus: Putative 3-methyladenine DNA glycosylase (203 aa).

It belongs to the DNA glycosylase MPG family.

The polypeptide is Putative 3-methyladenine DNA glycosylase (Clostridium botulinum (strain Loch Maree / Type A3)).